Here is a 276-residue protein sequence, read N- to C-terminus: Transmembrane protein 45B (276 aa).

6 consecutive transmembrane segments (helical) span residues 7–27, 48–68, 95–115, 147–167, 181–201, and 213–233; these read HALPGSFFLIVGLWWSLKYPL, IIEAAIRTLFAVIGILVEQFV, LFFAVSGIMDMLTYLITHVPL, IHSLLLYTVFGGALSLAVEVV, LLLLQGTWFWQIGFVLFPPFG, and IMFVTMCFCWHYLAALCILAA. Serine 271 and serine 273 each carry phosphoserine.

Belongs to the TMEM45 family.

The protein localises to the endosome membrane. The protein resides in the lysosome membrane. It localises to the golgi apparatus. It is found in the trans-Golgi network membrane. Plays a role in innate immunity. This is Transmembrane protein 45B (TMEM45B) from Bos taurus (Bovine).